The chain runs to 96 residues: Aspartyl/glutamyl-tRNA(Asn/Gln) amidotransferase subunit C (96 aa).

It belongs to the GatC family. In terms of assembly, heterotrimer of A, B and C subunits.

The enzyme catalyses L-glutamyl-tRNA(Gln) + L-glutamine + ATP + H2O = L-glutaminyl-tRNA(Gln) + L-glutamate + ADP + phosphate + H(+). It catalyses the reaction L-aspartyl-tRNA(Asn) + L-glutamine + ATP + H2O = L-asparaginyl-tRNA(Asn) + L-glutamate + ADP + phosphate + 2 H(+). Functionally, allows the formation of correctly charged Asn-tRNA(Asn) or Gln-tRNA(Gln) through the transamidation of misacylated Asp-tRNA(Asn) or Glu-tRNA(Gln) in organisms which lack either or both of asparaginyl-tRNA or glutaminyl-tRNA synthetases. The reaction takes place in the presence of glutamine and ATP through an activated phospho-Asp-tRNA(Asn) or phospho-Glu-tRNA(Gln). This is Aspartyl/glutamyl-tRNA(Asn/Gln) amidotransferase subunit C from Bacillus velezensis (strain DSM 23117 / BGSC 10A6 / LMG 26770 / FZB42) (Bacillus amyloliquefaciens subsp. plantarum).